Consider the following 375-residue polypeptide: Probable Na(+)/H(+) antiporter GerT (375 aa).

The next 10 helical transmembrane spans lie at 27–47 (PSVL…LGII), 89–109 (AGGI…FGLI), 112–132 (HAIF…VQTL), 145–165 (TILG…AFVM), 183–203 (IIFF…IMKM), 204–224 (LVPL…CFSF), 226–246 (YYSE…GIAI), 261–281 (PIAY…EITF), 288–308 (LWFI…GSGL), and 350–370 (ENFT…PPLL).

Belongs to the monovalent cation:proton antiporter 2 (CPA2) transporter (TC 2.A.37) family.

Its subcellular location is the membrane. In terms of biological role, contributes to the success of spore outgrowth from the germinated state during alkaline or Na(+) stress. Does not have a significant role in germination. This chain is Probable Na(+)/H(+) antiporter GerT (gerT), found in Bacillus cereus.